Here is a 640-residue protein sequence, read N- to C-terminus: Chaperone protein DnaK (640 aa).

Thr201 carries the phosphothreonine; by autocatalysis modification. Low complexity predominate over residues 603-621 (AASADQGGAPGADAGNAGK). The interval 603–625 (AASADQGGAPGADAGNAGKAQDD) is disordered.

The protein belongs to the heat shock protein 70 family.

Acts as a chaperone. This Stenotrophomonas maltophilia (strain K279a) protein is Chaperone protein DnaK.